Here is a 215-residue protein sequence, read N- to C-terminus: Transmembrane emp24 domain-containing protein 11 (215 aa).

The signal sequence occupies residues 1–17; sequence MQIQTILLCFSFSFSAA. The Lumenal portion of the chain corresponds to 18 to 167; the sequence is FYFHAGEREE…ILKEQDYQRD (150 aa). The GOLD domain occupies 27-125; that stretch reads EKCIIEDIPS…KLRIHLDIRV (99 aa). Asn105 is a glycosylation site (N-linked (GlcNAc...) asparagine). Residues 136-171 adopt a coiled-coil conformation; it reads QAKDKVNEVTFKLQHLIEQVEQILKEQDYQRDREEN. A helical membrane pass occupies residues 168 to 185; the sequence is REENFRITSEDTNRNVLW. The Cytoplasmic segment spans residues 186-215; it reads WAFAQILIFISVGIFQMKHLKDFFIAKKLV. The COPII vesicle coat-binding signature appears at 208 to 209; that stretch reads FF. Residues 208–215 carry the COPI vesicle coat-binding motif; sequence FFIAKKLV.

The protein belongs to the EMP24/GP25L family.

The protein resides in the endoplasmic reticulum membrane. Its function is as follows. Part of a complex whose function is to bind Ca(2+) to the ER membrane and thereby regulate the retention of ER resident proteins. The polypeptide is Transmembrane emp24 domain-containing protein 11 (Tmed11) (Mus musculus (Mouse)).